Reading from the N-terminus, the 98-residue chain is Large ribosomal subunit protein uL23 (98 aa).

Belongs to the universal ribosomal protein uL23 family. Part of the 50S ribosomal subunit. Contacts protein L29, and trigger factor when it is bound to the ribosome.

In terms of biological role, one of the early assembly proteins it binds 23S rRNA. One of the proteins that surrounds the polypeptide exit tunnel on the outside of the ribosome. Forms the main docking site for trigger factor binding to the ribosome. This chain is Large ribosomal subunit protein uL23, found in Nitrobacter hamburgensis (strain DSM 10229 / NCIMB 13809 / X14).